A 124-amino-acid polypeptide reads, in one-letter code: Darcynin homolog (124 aa).

The protein belongs to the darcynin family.

In Granulibacter bethesdensis (strain ATCC BAA-1260 / CGDNIH1), this protein is Darcynin homolog.